A 192-amino-acid chain; its full sequence is Phosphoheptose isomerase (192 aa).

In terms of domain architecture, SIS spans 34–192; the sequence is VVDAYKAGNK…VERELFVKGK (159 aa). 49-51 lines the substrate pocket; the sequence is NGG. 2 residues coordinate Zn(2+): histidine 58 and glutamate 62. Residues glutamate 62, 91–92, 117–119, serine 122, and glutamine 169 contribute to the substrate site; these read ND and STS. The Zn(2+) site is built by glutamine 169 and histidine 177.

This sequence belongs to the SIS family. GmhA subfamily. As to quaternary structure, homotetramer. Zn(2+) is required as a cofactor.

The protein localises to the cytoplasm. The catalysed reaction is 2 D-sedoheptulose 7-phosphate = D-glycero-alpha-D-manno-heptose 7-phosphate + D-glycero-beta-D-manno-heptose 7-phosphate. Its pathway is carbohydrate biosynthesis; D-glycero-D-manno-heptose 7-phosphate biosynthesis; D-glycero-alpha-D-manno-heptose 7-phosphate and D-glycero-beta-D-manno-heptose 7-phosphate from sedoheptulose 7-phosphate: step 1/1. In terms of biological role, catalyzes the isomerization of sedoheptulose 7-phosphate in D-glycero-D-manno-heptose 7-phosphate. The protein is Phosphoheptose isomerase of Citrifermentans bemidjiense (strain ATCC BAA-1014 / DSM 16622 / JCM 12645 / Bem) (Geobacter bemidjiensis).